The sequence spans 119 residues: MVKLGFSRELRLLTPSHFKCVFQKPLRVSTPEITILARKNNLEHSRLGLTVAKKHLKRAHDRNRVKRISRESFRLLQGQLANYDFVIITKKGIGNLDNQQLFQTLDKLWKRHIRLVQKS.

This sequence belongs to the RnpA family. Consists of a catalytic RNA component (M1 or rnpB) and a protein subunit.

The enzyme catalyses Endonucleolytic cleavage of RNA, removing 5'-extranucleotides from tRNA precursor.. In terms of biological role, RNaseP catalyzes the removal of the 5'-leader sequence from pre-tRNA to produce the mature 5'-terminus. It can also cleave other RNA substrates such as 4.5S RNA. The protein component plays an auxiliary but essential role in vivo by binding to the 5'-leader sequence and broadening the substrate specificity of the ribozyme. This Histophilus somni (strain 129Pt) (Haemophilus somnus) protein is Ribonuclease P protein component.